The following is a 135-amino-acid chain: ATP synthase epsilon chain (135 aa).

It belongs to the ATPase epsilon chain family. In terms of assembly, F-type ATPases have 2 components, CF(1) - the catalytic core - and CF(0) - the membrane proton channel. CF(1) has five subunits: alpha(3), beta(3), gamma(1), delta(1), epsilon(1). CF(0) has three main subunits: a, b and c.

The protein localises to the cell inner membrane. Produces ATP from ADP in the presence of a proton gradient across the membrane. The protein is ATP synthase epsilon chain of Nitrobacter winogradskyi (strain ATCC 25391 / DSM 10237 / CIP 104748 / NCIMB 11846 / Nb-255).